The sequence spans 478 residues: Ankyrin repeat and BTB/POZ domain-containing protein 1 (478 aa).

ANK repeat units lie at residues 1-31 and 35-64; these read MDTSDLFASCRKGDVGRVRYLLEQRDVEVNV and WDSTPLYYACLCGHEELVLYLLANGARCEA. 2 BTB domains span residues 115 to 182 and 272 to 346; these read SDVV…DIGV and PDIC…ELSP. Residues 451–477 adopt a coiled-coil conformation; sequence VQTYSAIEEAQQRLRALEDLLVSIGLD.

In terms of tissue distribution, ubiquitously expressed in all fetal tissues examined including heart, brain, liver, and kidney. Also expressed at lower levels in both adult heart and hypertrophic heart.

The protein resides in the cytoplasm. May act as a mediator of the PTEN growth-suppressive signaling pathway. May play a role in developmental processes. In Homo sapiens (Human), this protein is Ankyrin repeat and BTB/POZ domain-containing protein 1.